Consider the following 513-residue polypeptide: Protein disulfide-isomerase 2 (513 aa).

A signal peptide spans 1–20 (MNKFLALLFVLALFANIAFS). 2 consecutive Thioredoxin domains span residues 21-147 (CEGH…EELK) and 355-486 (DVIG…DNAA). Residues Cys-70, Cys-73, Cys-406, and Cys-409 each act as nucleophile in the active site. Disulfide bonds link Cys-70–Cys-73 and Cys-406–Cys-409. Residues 491-513 (LPSSQTDDNVESKKDSSAKHDEL) form a disordered region. The span at 500-513 (VESKKDSSAKHDEL) shows a compositional bias: basic and acidic residues. Residues 510 to 513 (HDEL) carry the Prevents secretion from ER motif.

Belongs to the protein disulfide isomerase family.

It is found in the endoplasmic reticulum lumen. It carries out the reaction Catalyzes the rearrangement of -S-S- bonds in proteins.. Its function is as follows. Participates in the folding of proteins containing disulfide bonds, may be involved in glycosylation, prolyl hydroxylation and triglyceride transfer. The sequence is that of Protein disulfide-isomerase 2 (pdi2) from Dictyostelium discoideum (Social amoeba).